The primary structure comprises 312 residues: uncharacterized protein (312 aa).

8 helical membrane-spanning segments follow: residues 4–24, 45–65, 75–95, 117–137, 171–191, 217–237, 253–275, and 280–299; these read IFLAGLAAGFQTTWTLGKVIF, LITPVMGLFGLSGEAAIPLVL, IAGILTLDLSVKEVFILAVML, VILAVRIGLAAVSAIVINLIW, GLGVLQLAAIVIPLMIIIQFL, TSMTMVTGLTIGLAYGAGVMI, AFIFLVACHAVVEDTLVFIPLGI, and LLLIRVTTAVLLTMAIAHTW.

The protein localises to the cell membrane. This is an uncharacterized protein from Bacillus subtilis (strain 168).